Here is a 148-residue protein sequence, read N- to C-terminus: Large ribosomal subunit protein eL19 (148 aa).

Positions 52–76 (KPKKGISSYRSKKIAQQKKKGRRRG) are enriched in basic residues. Residues 52-95 (KPKKGISSYRSKKIAQQKKKGRRRGPGSIKGAKGARRPKKDEWM) are disordered.

It belongs to the eukaryotic ribosomal protein eL19 family. In terms of assembly, part of the 50S ribosomal subunit.

Binds to the 23S rRNA. This chain is Large ribosomal subunit protein eL19, found in Methanothermobacter thermautotrophicus (strain ATCC 29096 / DSM 1053 / JCM 10044 / NBRC 100330 / Delta H) (Methanobacterium thermoautotrophicum).